Reading from the N-terminus, the 494-residue chain is Probable serine/threonine-protein kinase BSK3 (494 aa).

Glycine 2 carries N-myristoyl glycine lipidation. Residues 61-316 (ENIVSEHGEK…SLVQALAPLQ (256 aa)) enclose the Protein kinase domain. Residues 67–75 (HGEKAPNVV) and lysine 89 each bind ATP. Aspartate 183 acts as the Proton acceptor in catalysis. A phosphoserine mark is found at serine 213 and serine 215. A TPR repeat occupies 423–456 (PTIYARRCLSYLMNDKAEQALSDAMQALVISPTW).

In terms of assembly, interacts with BRI1 and BSL1. Post-translationally, phosphorylated at Ser-213 and Ser-215 by BRI1. Phosphorylation at Ser-215 is required for its function in the regulation of brassinosteroid signaling. Phosphorylation by BRI1 disrupts the interaction between its TPR and kinase domains, thereby increasing the binding between its kinase domain and BSL1.

It is found in the cell membrane. It catalyses the reaction L-seryl-[protein] + ATP = O-phospho-L-seryl-[protein] + ADP + H(+). The enzyme catalyses L-threonyl-[protein] + ATP = O-phospho-L-threonyl-[protein] + ADP + H(+). Its function is as follows. Probable serine/threonine kinase that acts as a positive regulator of brassinosteroid (BR) signaling downstream of BRI1. The protein is Probable serine/threonine-protein kinase BSK3 of Oryza sativa subsp. japonica (Rice).